Consider the following 254-residue polypeptide: Arginine transport ATP-binding protein ArgV (254 aa).

The ABC transporter domain maps to isoleucine 6–leucine 250. Glycine 38–serine 45 contributes to the ATP binding site.

It belongs to the ABC transporter superfamily. In terms of assembly, the complex is probably composed of two ATP-binding proteins (ArgV), two transmembrane proteins (ArgU) and a solute-binding protein (ArgT).

The protein resides in the cell membrane. The catalysed reaction is a polar amino acid(out) + ATP + H2O = a polar amino acid(in) + ADP + phosphate + H(+). The enzyme catalyses L-arginine(out) + ATP + H2O = L-arginine(in) + ADP + phosphate + H(+). In terms of biological role, part of the ABC transporter complex ArgTUV involved in L-arginine import. May also transport L-citrulline. Probably responsible for energy coupling to the transport system. The chain is Arginine transport ATP-binding protein ArgV from Corynebacterium glutamicum (strain ATCC 13032 / DSM 20300 / JCM 1318 / BCRC 11384 / CCUG 27702 / LMG 3730 / NBRC 12168 / NCIMB 10025 / NRRL B-2784 / 534).